A 105-amino-acid polypeptide reads, in one-letter code: MRGAVQVFIMLLLATVSDCAVITGACERDVQCGAGTCCAISLWLRGLRLCTPLGREGEECHPGSHKIPFFRKRQHHTCPCSPSLLCSRFPDGRYRCSQDLKNVNF.

An N-terminal signal peptide occupies residues 1 to 19; the sequence is MRGAVQVFIMLLLATVSDC. Disulfide bonds link cysteine 26-cysteine 38, cysteine 32-cysteine 50, cysteine 37-cysteine 78, cysteine 60-cysteine 86, and cysteine 80-cysteine 96.

It belongs to the AVIT (prokineticin) family.

The protein resides in the secreted. In terms of biological role, potently contracts gastrointestinal (GI) smooth muscle. Induces proliferation, migration and fenestration (the formation of membrane discontinuities) in capillary endothelial cells derived from endocrine glands. Has little or no effect on a variety of other endothelial and non-endothelial cell types. Induces proliferation and differentiation, but not migration, of enteric neural crest cells. Directly influences neuroblastoma progression by promoting the proliferation and migration of neuroblastoma cells. Positively regulates PTGS2 expression and prostaglandin synthesis. May play a role in placentation. May play a role in normal and pathological testis angiogenesis. In Rattus norvegicus (Rat), this protein is Prokineticin-1 (Prok1).